Reading from the N-terminus, the 116-residue chain is NADH-ubiquinone oxidoreductase chain 3 (116 aa).

3 consecutive transmembrane segments (helical) span residues 3 to 23 (LIMTILTITVALSLILATVSF), 56 to 76 (FFLVAILFLLFDLEIALLLPL), and 87 to 107 (GTFFWATTVLILLTLGLIYEW).

This sequence belongs to the complex I subunit 3 family.

The protein resides in the mitochondrion membrane. It catalyses the reaction a ubiquinone + NADH + 5 H(+)(in) = a ubiquinol + NAD(+) + 4 H(+)(out). In terms of biological role, core subunit of the mitochondrial membrane respiratory chain NADH dehydrogenase (Complex I) that is believed to belong to the minimal assembly required for catalysis. Complex I functions in the transfer of electrons from NADH to the respiratory chain. The immediate electron acceptor for the enzyme is believed to be ubiquinone. The sequence is that of NADH-ubiquinone oxidoreductase chain 3 (MT-ND3) from Cyprinus carpio (Common carp).